Here is a 476-residue protein sequence, read N- to C-terminus: tRNA(Ile)-lysidine synthase (476 aa).

ATP is bound at residue serine 25–serine 30.

The protein belongs to the tRNA(Ile)-lysidine synthase family.

It is found in the cytoplasm. It catalyses the reaction cytidine(34) in tRNA(Ile2) + L-lysine + ATP = lysidine(34) in tRNA(Ile2) + AMP + diphosphate + H(+). Its function is as follows. Ligates lysine onto the cytidine present at position 34 of the AUA codon-specific tRNA(Ile) that contains the anticodon CAU, in an ATP-dependent manner. Cytidine is converted to lysidine, thus changing the amino acid specificity of the tRNA from methionine to isoleucine. This is tRNA(Ile)-lysidine synthase from Bacillus licheniformis (strain ATCC 14580 / DSM 13 / JCM 2505 / CCUG 7422 / NBRC 12200 / NCIMB 9375 / NCTC 10341 / NRRL NRS-1264 / Gibson 46).